The chain runs to 467 residues: Actinorhodin polyketide putative beta-ketoacyl synthase 1 (467 aa).

The disordered stretch occupies residues 1–35; the sequence is MPLDAAPVDPASRGPVSAFEPPSSHGADDDDDHRT. In terms of domain architecture, Ketosynthase family 3 (KS3) spans 45–459; sequence KRRVVITGVG…GFQSAMVLRD (415 aa). Residues C212, H352, and H389 each act as for beta-ketoacyl synthase activity in the active site.

Belongs to the thiolase-like superfamily. Beta-ketoacyl-ACP synthases family.

The protein operates within antibiotic biosynthesis; actinorhodin biosynthesis. This Streptomyces coelicolor (strain ATCC BAA-471 / A3(2) / M145) protein is Actinorhodin polyketide putative beta-ketoacyl synthase 1.